A 461-amino-acid polypeptide reads, in one-letter code: Cysteine--tRNA ligase (461 aa).

Residue cysteine 28 participates in Zn(2+) binding. The 'HIGH' region motif lies at 30–40 (ITVYDLCHIGH). Residues cysteine 209, histidine 234, and glutamate 238 each coordinate Zn(2+). Positions 266–270 (KMSKS) match the 'KMSKS' region motif. An ATP-binding site is contributed by lysine 269.

The protein belongs to the class-I aminoacyl-tRNA synthetase family. Monomer. Zn(2+) serves as cofactor.

Its subcellular location is the cytoplasm. It catalyses the reaction tRNA(Cys) + L-cysteine + ATP = L-cysteinyl-tRNA(Cys) + AMP + diphosphate. The protein is Cysteine--tRNA ligase of Escherichia coli O157:H7.